Here is a 129-residue protein sequence, read N- to C-terminus: Lysozyme C (129 aa).

The region spanning 1–129 is the C-type lysozyme domain; sequence KIYKRCELAA…VSTWIKDCKL (129 aa). Intrachain disulfides connect Cys-6-Cys-127, Cys-30-Cys-115, Cys-64-Cys-80, and Cys-76-Cys-94. Active-site residues include Glu-35 and Asp-52.

It belongs to the glycosyl hydrolase 22 family. In terms of assembly, monomer.

The protein resides in the secreted. The enzyme catalyses Hydrolysis of (1-&gt;4)-beta-linkages between N-acetylmuramic acid and N-acetyl-D-glucosamine residues in a peptidoglycan and between N-acetyl-D-glucosamine residues in chitodextrins.. Functionally, lysozymes have primarily a bacteriolytic function; those in tissues and body fluids are associated with the monocyte-macrophage system and enhance the activity of immunoagents. This is Lysozyme C (LYZ) from Ortalis vetula (Plain chachalaca).